The following is a 124-amino-acid chain: Putative membrane protein insertion efficiency factor (124 aa).

The protein belongs to the UPF0161 family.

The protein resides in the cell inner membrane. Its function is as follows. Could be involved in insertion of integral membrane proteins into the membrane. The chain is Putative membrane protein insertion efficiency factor from Psychrobacter arcticus (strain DSM 17307 / VKM B-2377 / 273-4).